Here is an 868-residue protein sequence, read N- to C-terminus: MRELVNIPLLQMLTLVAFSGTEKLPKAPVITTPLETVDALVEEVATFMCAVESYPQPEISWTRNKILIKLFDTRYSIRENGQLLTILSVEDSDDGIYCCIANNGVGGAVESCGALQVKMKPKITRPPINVKIIEGLKAVLPCTTMGNPKPSVSWIKGDNALRENSRIAVLESGSLRIHNVQKEDAGQYRCVAKNSLGTAYSKLVKLEVEVFARILRAPESHNVTFGSFVTLRCTAIGIPVPTISWIENGNAVSSGSIQESVKDRVIDSRLQLFITKPGLYTCIATNKHGEKFSTAKAAATVSIAEWSKSQKDSQGYCAQYRGEVCDAVLAKDALVFFNTSYRDPEDAQELLIHTAWNELKAVSPLCRPAAEALLCNHLFQECSPGVVPTPMPICREYCLAVKELFCAKEWQAMEGKAHRGLYRSGMHLLPVPECSKLPSMHRDPTACTRLPYLDYKKENITTFPSITSSRPSADIPNLPASTSSFAVSPAYSMTVIISIVSSFALFALLTIATLYCCRRRKEWKNKKRESTAVTLTTLPSELLLDRLHPNPMYQRMPLLLNPKLLSLEYPRNNIEYVRDIGEGAFGRVFQARAPGLLPYEPFTMVAVKMLKEEASADMQADFQREAALMAEFDNPNIVKLLGVCAVGKPMCLLFEYMAYGDLNEFLRSMSPHTVCSLSHSDLSTRARVSSPGPPPLSCAEQLCIARQVAAGMAYLSERKFVHRDLATRNCLVGETMVVKIADFGLSRNIYSADYYKADGNDAIPIRWMPPESIFYNRYTTESDVWAYGVVLWEIFSYGLQPYYGMAHEEVIYYVRDGNILACPENCPLELYNLMRLCWSKLPADRPSFCSIHRILQRMCERAEGTVGV.

An N-terminal signal peptide occupies residues 1 to 21; the sequence is MRELVNIPLLQMLTLVAFSGT. At 22-494 the chain is on the extracellular side; that stretch reads EKLPKAPVIT…FAVSPAYSMT (473 aa). 3 consecutive Ig-like domains span residues 28 to 116, 121 to 205, and 212 to 302; these read PVIT…GALQ, PKIT…KLVK, and ARIL…ATVS. Cystine bridges form between cysteine 49/cysteine 99, cysteine 98/cysteine 112, and cysteine 142/cysteine 190. N-linked (GlcNAc...) asparagine glycosylation occurs at asparagine 222. 6 disulfides stabilise this stretch: cysteine 233–cysteine 282, cysteine 317–cysteine 382, cysteine 325–cysteine 375, cysteine 366–cysteine 406, cysteine 394–cysteine 447, and cysteine 398–cysteine 434. In terms of domain architecture, FZ spans 312 to 450; it reads DSQGYCAQYR…HRDPTACTRL (139 aa). An N-linked (GlcNAc...) asparagine glycan is attached at asparagine 338. Asparagine 459 is a glycosylation site (N-linked (GlcNAc...) asparagine). The chain crosses the membrane as a helical span at residues 495–515; it reads VIISIVSSFALFALLTIATLY. At 516 to 868 the chain is on the cytoplasmic side; that stretch reads CCRRRKEWKN…CERAEGTVGV (353 aa). Tyrosine 553 carries the phosphotyrosine; by autocatalysis modification. In terms of domain architecture, Protein kinase spans 574–855; sequence IEYVRDIGEG…PSFCSIHRIL (282 aa). Residues 580–588 and lysine 608 each bind ATP; that span reads IGEGAFGRV. Residues serine 680 and serine 697 each carry the phosphoserine; by CK2 modification. Aspartate 724 acts as the Proton acceptor in catalysis. At tyrosine 754 the chain carries Phosphotyrosine; by autocatalysis.

This sequence belongs to the protein kinase superfamily. Tyr protein kinase family. As to quaternary structure, monomer. Homodimer. Interacts with LRP4; the heterodimer forms an AGRIN receptor complex that binds AGRIN resulting in activation of MUSK. Forms a heterotetramer composed of 2 DOK7 and 2 MUSK molecules which facilitates MUSK trans-autophosphorylation on tyrosine residue and activation. Interacts (via cytoplasmic part) with DOK7 (via IRS-type PTB domain); requires MUSK phosphorylation. Interacts with DVL1 (via DEP domain); the interaction is direct and mediates the formation of a DVL1, MUSK and PAK1 ternary complex involved in AChR clustering. Interacts with PDZRN3; this interaction is enhanced by agrin. Interacts with FNTA; the interaction is direct and mediates AGRIN-induced phosphorylation and activation of FNTA. Interacts with CSNK2B; mediates regulation by CK2. Interacts (via the cytoplasmic domain) with DNAJA3. Interacts with NSF; may regulate MUSK endocytosis and activity. Interacts with CAV3; may regulate MUSK signaling. Interacts with RNF31. The cofactor is Mg(2+). Ubiquitinated by PDZRN3. Ubiquitination promotes endocytosis and lysosomal degradation. Post-translationally, phosphorylated. Phosphorylation is induced by AGRIN. Autophosphorylated. Autophosphorylation at Tyr-553 is required for interaction with DOK7 which in turn stimulates the phosphorylation and the activation of MUSK. In terms of processing, neddylated. In terms of tissue distribution, expressed preferentially in skeletal muscle.

It is found in the postsynaptic cell membrane. The catalysed reaction is L-tyrosyl-[protein] + ATP = O-phospho-L-tyrosyl-[protein] + ADP + H(+). Its activity is regulated as follows. Positively regulated by CK2. Receptor tyrosine kinase which plays a central role in the formation and the maintenance of the neuromuscular junction (NMJ), the synapse between the motor neuron and the skeletal muscle. Recruitment of AGRIN by LRP4 to the MUSK signaling complex induces phosphorylation and activation of MUSK, the kinase of the complex. The activation of MUSK in myotubes regulates the formation of NMJs through the regulation of different processes including the specific expression of genes in subsynaptic nuclei, the reorganization of the actin cytoskeleton and the clustering of the acetylcholine receptors (AChR) in the postsynaptic membrane. May regulate AChR phosphorylation and clustering through activation of ABL1 and Src family kinases which in turn regulate MUSK. DVL1 and PAK1 that form a ternary complex with MUSK are also important for MUSK-dependent regulation of AChR clustering. May positively regulate Rho family GTPases through FNTA. Mediates the phosphorylation of FNTA which promotes prenylation, recruitment to membranes and activation of RAC1 a regulator of the actin cytoskeleton and of gene expression. Other effectors of the MUSK signaling include DNAJA3 which functions downstream of MUSK. May also play a role within the central nervous system by mediating cholinergic responses, synaptic plasticity and memory formation. This Mus musculus (Mouse) protein is Muscle, skeletal receptor tyrosine-protein kinase (Musk).